The sequence spans 444 residues: Chromosome partition protein MukF (444 aa).

The tract at residues 212–240 (LDETSGNLRELQDTLNAAGDKLQAQLLRI) is leucine-zipper.

This sequence belongs to the MukF family. Interacts, and probably forms a ternary complex, with MukE and MukB via its C-terminal region. The complex formation is stimulated by calcium or magnesium. It is required for an interaction between MukE and MukB.

It is found in the cytoplasm. It localises to the nucleoid. Involved in chromosome condensation, segregation and cell cycle progression. May participate in facilitating chromosome segregation by condensation DNA from both sides of a centrally located replisome during cell division. Not required for mini-F plasmid partitioning. Probably acts via its interaction with MukB and MukE. Overexpression results in anucleate cells. It has a calcium binding activity. The protein is Chromosome partition protein MukF of Haemophilus influenzae (strain PittEE).